Reading from the N-terminus, the 169-residue chain is MLNAKKSNKTKEKETDWQERVIQVRRVTKVVKGGKKLSFRAIIILGNERGQVGVGVGKASDVIGAVKKAVTDGRKNLINIPLTNQNSIPHIVQGYSGAAKVIIKPSAPGSGVIAGGSVRTILELAGIKNILAKQLGSSNPLNNARAAANALINLRTYTSVLNDRNLDLH.

The 64-residue stretch at 17 to 80 (WQERVIQVRR…TDGRKNLINI (64 aa)) folds into the S5 DRBM domain.

Belongs to the universal ribosomal protein uS5 family. As to quaternary structure, part of the 30S ribosomal subunit. Contacts protein S4.

It is found in the plastid. The protein localises to the chloroplast. Its function is as follows. With S4 and S12 plays an important role in translational accuracy. This is Small ribosomal subunit protein uS5c (rps5) from Guillardia theta (Cryptophyte).